The following is a 426-amino-acid chain: Pannexin-1 (426 aa).

At 1 to 40 (MAIAHLATEYVFSDFLLKEPTEPKFKGLRLELAVDKMVTC) the chain is on the cytoplasmic side. Cys-40 is subject to S-nitrosocysteine. The chain crosses the membrane as a helical span at residues 41-61 (IAVGLPLLLISLAFAQEISIG). The Extracellular segment spans residues 62 to 106 (TQISCFSPSSFSWRQAAFVDSYCWAAVQQKSSLQSESGNLPLWLH). Disulfide bonds link Cys-66–Cys-264 and Cys-84–Cys-245. A helical transmembrane segment spans residues 107-127 (KFFPYILLLFAILLYLPALFW). The Cytoplasmic segment spans residues 128–216 (RFSAAPHLCS…HLIMKYISCR (89 aa)). A Phosphotyrosine modification is found at Tyr-198. Residues 217–237 (LVTFVVILLACIYLSYYFSLS) traverse the membrane as a helical segment. Residues 238–277 (SLSDEFLCSIKSGVLKNDSTIPDRFQCKLIAVGIFQLLSL) lie on the Extracellular side of the membrane. A glycan (N-linked (GlcNAc...) asparagine) is linked at Asn-254. A helical membrane pass occupies residues 278–298 (INLIVYALLIPVVVYTFFIPF). Residues 299-426 (RQKTDILKVY…SRQRLLNPSC (128 aa)) are Cytoplasmic-facing. Cys-346 bears the S-nitrosocysteine mark.

The protein belongs to the pannexin family. Homoheptameric. Post-translationally, S-nitrosylation inhibits channel currents and ATP release. N-glycosylation may play a role in cell surface targeting. Exists in three glycosylation states: non-glycosylated (GLY0), high-mannose glycosylated (GLY1), and fully mature glycosylated (GLY2). In terms of processing, phosphorylated at Tyr-198 by SRC. Phosphorylation activates ATP release. Constitutively phosphorylated in vascular smooth muscle cells. Post-translationally, cleaved by CASP3 and CASP7 during apoptosis. Cleavage opens the channel for the release of metabolites and induces plasma membrane permeability during apoptosis. In terms of tissue distribution, widely expressed, including in cartilage, skin, spleen and brain.

The protein localises to the cell membrane. It localises to the endoplasmic reticulum membrane. It catalyses the reaction chloride(in) = chloride(out). It carries out the reaction iodide(out) = iodide(in). The catalysed reaction is Ca(2+)(in) = Ca(2+)(out). The enzyme catalyses ATP(in) = ATP(out). It catalyses the reaction K(+)(in) = K(+)(out). It carries out the reaction Na(+)(in) = Na(+)(out). The catalysed reaction is nitrate(in) = nitrate(out). The enzyme catalyses L-aspartate(out) = L-aspartate(in). It catalyses the reaction L-glutamate(out) = L-glutamate(in). It carries out the reaction D-gluconate(in) = D-gluconate(out). The catalysed reaction is spermidine(in) = spermidine(out). Functionally, ion channel involved in a variety of physiological functions such as blood pressure regulation, apoptotic cell clearance and oogenesis. Forms anion-selective channels with relatively low conductance and an order of permeabilities: nitrate&gt;iodide&gt;chlroride&gt;&gt;aspartate=glutamate=gluconate. Can release ATP upon activation through phosphorylation or cleavage at C-terminus. May play a role as a Ca(2+)-leak channel to regulate ER Ca(2+) homeostasis. Its function is as follows. During apoptosis and after cleavage by caspases of the C-terminal tail, acts as a plasma membrane channel which mediates the regulated release of find-me signals, such as nucleotides ATP and UTP, and selective plasme membrane permeability. This is Pannexin-1 from Mus musculus (Mouse).